The chain runs to 366 residues: Chorismate synthase (366 aa).

Positions 48 and 54 each coordinate NADP(+). Residues 125–127, 238–239, glycine 278, 293–297, and arginine 319 contribute to the FMN site; these read RSS, NA, and KPTSS.

This sequence belongs to the chorismate synthase family. In terms of assembly, homotetramer. The cofactor is FMNH2.

It carries out the reaction 5-O-(1-carboxyvinyl)-3-phosphoshikimate = chorismate + phosphate. The protein operates within metabolic intermediate biosynthesis; chorismate biosynthesis; chorismate from D-erythrose 4-phosphate and phosphoenolpyruvate: step 7/7. Catalyzes the anti-1,4-elimination of the C-3 phosphate and the C-6 proR hydrogen from 5-enolpyruvylshikimate-3-phosphate (EPSP) to yield chorismate, which is the branch point compound that serves as the starting substrate for the three terminal pathways of aromatic amino acid biosynthesis. This reaction introduces a second double bond into the aromatic ring system. This is Chorismate synthase from Neisseria meningitidis serogroup B (strain ATCC BAA-335 / MC58).